The sequence spans 145 residues: D-aminoacyl-tRNA deacylase (145 aa).

The Gly-cisPro motif, important for rejection of L-amino acids signature appears at 137–138; that stretch reads GP.

Belongs to the DTD family. Homodimer.

It localises to the cytoplasm. It carries out the reaction glycyl-tRNA(Ala) + H2O = tRNA(Ala) + glycine + H(+). The enzyme catalyses a D-aminoacyl-tRNA + H2O = a tRNA + a D-alpha-amino acid + H(+). An aminoacyl-tRNA editing enzyme that deacylates mischarged D-aminoacyl-tRNAs. Also deacylates mischarged glycyl-tRNA(Ala), protecting cells against glycine mischarging by AlaRS. Acts via tRNA-based rather than protein-based catalysis; rejects L-amino acids rather than detecting D-amino acids in the active site. By recycling D-aminoacyl-tRNA to D-amino acids and free tRNA molecules, this enzyme counteracts the toxicity associated with the formation of D-aminoacyl-tRNA entities in vivo and helps enforce protein L-homochirality. This chain is D-aminoacyl-tRNA deacylase, found in Streptomyces avermitilis (strain ATCC 31267 / DSM 46492 / JCM 5070 / NBRC 14893 / NCIMB 12804 / NRRL 8165 / MA-4680).